The sequence spans 431 residues: Enolase (431 aa).

Residue Q166 participates in (2R)-2-phosphoglycerate binding. E208 functions as the Proton donor in the catalytic mechanism. Mg(2+) is bound by residues D245, E288, and D315. (2R)-2-phosphoglycerate is bound by residues K340, R369, S370, and K391. Catalysis depends on K340, which acts as the Proton acceptor.

Belongs to the enolase family. It depends on Mg(2+) as a cofactor.

The protein localises to the cytoplasm. Its subcellular location is the secreted. It localises to the cell surface. The enzyme catalyses (2R)-2-phosphoglycerate = phosphoenolpyruvate + H2O. It participates in carbohydrate degradation; glycolysis; pyruvate from D-glyceraldehyde 3-phosphate: step 4/5. Functionally, catalyzes the reversible conversion of 2-phosphoglycerate (2-PG) into phosphoenolpyruvate (PEP). It is essential for the degradation of carbohydrates via glycolysis. The chain is Enolase from Clostridium perfringens (strain 13 / Type A).